We begin with the raw amino-acid sequence, 123 residues long: Small ribosomal subunit protein uS13 (123 aa).

Residues 97–123 (PVRGQRTHTNAKTRKGRSKLPVAAKKK) are disordered.

The protein belongs to the universal ribosomal protein uS13 family. As to quaternary structure, part of the 30S ribosomal subunit. Forms a loose heterodimer with protein S19. Forms two bridges to the 50S subunit in the 70S ribosome.

Functionally, located at the top of the head of the 30S subunit, it contacts several helices of the 16S rRNA. In the 70S ribosome it contacts the 23S rRNA (bridge B1a) and protein L5 of the 50S subunit (bridge B1b), connecting the 2 subunits; these bridges are implicated in subunit movement. Contacts the tRNAs in the A and P-sites. The chain is Small ribosomal subunit protein uS13 from Ehrlichia chaffeensis (strain ATCC CRL-10679 / Arkansas).